The following is a 316-amino-acid chain: dTDP-4-dehydro-6-deoxyglucose reductase (316 aa).

16–17 (FI) provides a ligand contact to NAD(+). Residue Y151 is the Proton acceptor of the active site. K155 provides a ligand contact to NAD(+).

The protein belongs to the NAD(P)-dependent epimerase/dehydratase family.

The enzyme catalyses dTDP-alpha-D-fucose + NAD(+) = dTDP-4-dehydro-6-deoxy-alpha-D-glucose + NADH + H(+). The catalysed reaction is dTDP-alpha-D-fucose + NADP(+) = dTDP-4-dehydro-6-deoxy-alpha-D-glucose + NADPH + H(+). Its pathway is bacterial outer membrane biogenesis; LPS O-antigen biosynthesis. Inhibited by Cu(2+), while other divalent cations such as Ca(2+), Co(2+), Fe(2+), Mn(2+) and Mg(2+) have no obvious effects on enzyme activity. In terms of biological role, catalyzes the stereospecific reduction of the C-4 keto group of dTDP-4-dehydro-6-deoxy-D-glucose, leading to dTDP-D-fucopyranose. This is a step in the biosynthesis of D-fucofuranose, a component of E.coli O52 O antigen. Is more efficient using NADH than NADPH as cosubstrate. The chain is dTDP-4-dehydro-6-deoxyglucose reductase (fcf1) from Escherichia coli.